Consider the following 299-residue polypeptide: uncharacterized protein (299 aa).

The region spanning 1-59 (MDKIHAMQLFIKVAELESFSRAADFFALPKGSVSRQIQALEHQLGTQLLQRTTRRVKLT) is the HTH lysR-type domain. Residues 19–38 (FSRAADFFALPKGSVSRQIQ) constitute a DNA-binding region (H-T-H motif).

It belongs to the LysR transcriptional regulatory family.

This is an uncharacterized protein from Escherichia coli (strain K12).